The chain runs to 208 residues: High frequency lysogenization protein HflD homolog (208 aa).

Belongs to the HflD family.

Its subcellular location is the cytoplasm. It localises to the cell inner membrane. In Pseudomonas entomophila (strain L48), this protein is High frequency lysogenization protein HflD homolog.